A 1524-amino-acid polypeptide reads, in one-letter code: DNA polymerase alpha catalytic subunit (1524 aa).

Disordered regions lie at residues 1-53 and 68-139; these read MSGD…QKPI and RRRE…KVNP. Residues 20 to 30 show a composition bias toward basic and acidic residues; that stretch reads SSRKDTLERLK. The segment covering 79–96 has biased composition (acidic residues); sequence EDGEGGDLGYLDEGEEED. Zn(2+)-binding residues include C1333, C1336, C1375, C1378, C1414, C1419, C1440, and C1446. A CysA-type zinc finger spans residues 1333 to 1378; the sequence is CPSCSTAFNCPSIISSVCASISKKPATPETEESDSTFWLKLHCPKC. Residues 1414–1446 carry the CysB motif motif; sequence CEDESCKHTTRSPNFRLLGERERGTVCPNYPNC.

Belongs to the DNA polymerase type-B family.

It localises to the nucleus. The catalysed reaction is DNA(n) + a 2'-deoxyribonucleoside 5'-triphosphate = DNA(n+1) + diphosphate. Its function is as follows. Polymerase alpha in a complex with DNA primase is a replicative polymerase. The sequence is that of DNA polymerase alpha catalytic subunit (POLA) from Arabidopsis thaliana (Mouse-ear cress).